A 145-amino-acid chain; its full sequence is Ribosome maturation factor RimP (145 aa).

This sequence belongs to the RimP family.

The protein resides in the cytoplasm. Its function is as follows. Required for maturation of 30S ribosomal subunits. This chain is Ribosome maturation factor RimP, found in Borrelia garinii subsp. bavariensis (strain ATCC BAA-2496 / DSM 23469 / PBi) (Borreliella bavariensis).